The primary structure comprises 194 residues: Anthranilate synthase component 2 (194 aa).

A Glutamine amidotransferase type-1 domain is found at 2-194 (KIFFIDNFDS…QSVGFLEGLL (193 aa)). 57-59 (GPG) is an L-glutamine binding site. The active-site Nucleophile; for GATase activity is the C84. Residues Q88 and 134-135 (SL) each bind L-glutamine. Catalysis depends on for GATase activity residues H170 and E172.

In terms of assembly, heterotetramer consisting of two non-identical subunits: a beta subunit (TrpG) and a large alpha subunit (TrpE).

The catalysed reaction is chorismate + L-glutamine = anthranilate + pyruvate + L-glutamate + H(+). The protein operates within amino-acid biosynthesis; L-tryptophan biosynthesis; L-tryptophan from chorismate: step 1/5. Functionally, part of a heterotetrameric complex that catalyzes the two-step biosynthesis of anthranilate, an intermediate in the biosynthesis of L-tryptophan. In the first step, the glutamine-binding beta subunit (TrpG) of anthranilate synthase (AS) provides the glutamine amidotransferase activity which generates ammonia as a substrate that, along with chorismate, is used in the second step, catalyzed by the large alpha subunit of AS (TrpE) to produce anthranilate. In the absence of TrpG, TrpE can synthesize anthranilate directly from chorismate and high concentrations of ammonia. The sequence is that of Anthranilate synthase component 2 (trpG) from Helicobacter pylori (strain ATCC 700392 / 26695) (Campylobacter pylori).